The chain runs to 391 residues: Acetyl-CoA acetyltransferase (391 aa).

The Acyl-thioester intermediate role is filled by cysteine 88. Catalysis depends on proton acceptor residues histidine 347 and cysteine 377.

Belongs to the thiolase-like superfamily. Thiolase family. As to quaternary structure, homotetramer.

The protein localises to the cytoplasm. The catalysed reaction is 2 acetyl-CoA = acetoacetyl-CoA + CoA. It participates in metabolic intermediate biosynthesis; (R)-mevalonate biosynthesis; (R)-mevalonate from acetyl-CoA: step 1/3. This is Acetyl-CoA acetyltransferase (phaA) from Paracoccus denitrificans.